The sequence spans 247 residues: Eukaryotic translation initiation factor 6 (247 aa).

Ser-174 and Ser-175 each carry phosphoserine; by CK1.

Belongs to the eIF-6 family. Monomer. Associates with the 60S ribosomal subunit. Phosphorylation at Ser-174 and Ser-175 promotes nuclear export.

Its subcellular location is the cytoplasm. It localises to the nucleus. It is found in the nucleolus. Binds to the 60S ribosomal subunit and prevents its association with the 40S ribosomal subunit to form the 80S initiation complex in the cytoplasm. Is also involved in ribosome biogenesis. Associates with pre-60S subunits in the nucleus and is involved in its nuclear export. The protein is Eukaryotic translation initiation factor 6 (tif6) of Talaromyces stipitatus (strain ATCC 10500 / CBS 375.48 / QM 6759 / NRRL 1006) (Penicillium stipitatum).